The following is a 160-amino-acid chain: Ribosomal RNA large subunit methyltransferase H (160 aa).

S-adenosyl-L-methionine is bound by residues leucine 77 and glycine 109.

This sequence belongs to the RNA methyltransferase RlmH family. Homodimer.

It localises to the cytoplasm. It catalyses the reaction pseudouridine(1915) in 23S rRNA + S-adenosyl-L-methionine = N(3)-methylpseudouridine(1915) in 23S rRNA + S-adenosyl-L-homocysteine + H(+). Specifically methylates the pseudouridine at position 1915 (m3Psi1915) in 23S rRNA. This Moorella thermoacetica (strain ATCC 39073 / JCM 9320) protein is Ribosomal RNA large subunit methyltransferase H.